The following is a 489-amino-acid chain: MSHANLWIDGNWVQGQGKSWNTCNPVSQQVVWQGNEATAQQVEQACEAARQAFPQWATTSLTDRIAIIERFALLLEQNKEALAKIISQETSKPLWETLTEVQSMVAKVAISIRAYHQRTGKSITEMADGAASLRHRPHGVMAVFGPYNFPGHLPNGHIVPALIAGNVVVFKPSELTPWTAEATVKLWQQAGLPNAVLNLLQGSRETGIALAQSEHIDGVLFTGSASTGYQLHRQLAGAPEKILALEMGGNNALIIEDIDDIDAVVHLAIQSAFISAGQRCTCARRLIIKNGQAGDAFIQRFIEVARDLVIGDWDAEPQPFMGGVISVKAAEALLKAQQNLIDLGARSLLEMKQLRENSALVSPAILDVTAVPDIPDEEYFGPLTCIYRYDDFDEALKLANSTRFGLSVGLVSPKRALFERMLIEARAGIVNWNKPLTGASSAAPFGGVGASGNHRASAFYAADYCAWPMASLESEQLSLPEKLSPGIVL.

223–228 (GSASTG) serves as a coordination point for NAD(+). Catalysis depends on residues Glu-246 and Cys-280.

Belongs to the aldehyde dehydrogenase family. AstD subfamily.

It carries out the reaction N-succinyl-L-glutamate 5-semialdehyde + NAD(+) + H2O = N-succinyl-L-glutamate + NADH + 2 H(+). Its pathway is amino-acid degradation; L-arginine degradation via AST pathway; L-glutamate and succinate from L-arginine: step 4/5. Catalyzes the NAD-dependent reduction of succinylglutamate semialdehyde into succinylglutamate. The protein is N-succinylglutamate 5-semialdehyde dehydrogenase of Acinetobacter baylyi (strain ATCC 33305 / BD413 / ADP1).